A 332-amino-acid chain; its full sequence is 2,3-diketo-L-gulonate reductase (332 aa).

Histidine 44 functions as the Proton donor in the catalytic mechanism. NAD(+)-binding positions include 168–174 (ITMVDMS), 224–225 (WK), and 304–306 (GHE).

The protein belongs to the LDH2/MDH2 oxidoreductase family. DlgD subfamily. Homodimer.

It is found in the cytoplasm. It catalyses the reaction 3-dehydro-L-gulonate + NAD(+) = 2,3-dioxo-L-gulonate + NADH + H(+). It carries out the reaction 3-dehydro-L-gulonate + NADP(+) = 2,3-dioxo-L-gulonate + NADPH + H(+). Functionally, catalyzes the reduction of 2,3-diketo-L-gulonate in the presence of NADH, to form 3-keto-L-gulonate. This is 2,3-diketo-L-gulonate reductase from Escherichia coli O1:K1 / APEC.